The following is a 312-amino-acid chain: Ribonuclease Z (312 aa).

Zn(2+)-binding residues include H61, H63, D65, H66, H148, D216, and H275. D65 serves as the catalytic Proton acceptor.

It belongs to the RNase Z family. In terms of assembly, homodimer. It depends on Zn(2+) as a cofactor.

The enzyme catalyses Endonucleolytic cleavage of RNA, removing extra 3' nucleotides from tRNA precursor, generating 3' termini of tRNAs. A 3'-hydroxy group is left at the tRNA terminus and a 5'-phosphoryl group is left at the trailer molecule.. Functionally, zinc phosphodiesterase, which displays some tRNA 3'-processing endonuclease activity. Probably involved in tRNA maturation, by removing a 3'-trailer from precursor tRNA. In Clostridium tetani (strain Massachusetts / E88), this protein is Ribonuclease Z.